The following is a 460-amino-acid chain: Ammonium transporter Rh type B-A (460 aa).

The Cytoplasmic portion of the chain corresponds to 1–10; it reads MTGYSTNMRI. A helical membrane pass occupies residues 11 to 31; it reads KLPLFCLILQFITIILFAVFV. Over 32–62 the chain is Extracellular; it reads RYDHESDARGWHDELKNHSTANADNDFYFRY. Residue N48 is glycosylated (N-linked (GlcNAc...) asparagine). Residues 63 to 83 traverse the membrane as a helical segment; that stretch reads PSFQDVHVMIFIGFGFLMTFL. The Cytoplasmic portion of the chain corresponds to 84-87; the sequence is KRYG. Residues 88–108 traverse the membrane as a helical segment; it reads FSSVAFNFLIAAFGLQWSTLI. Over 109 to 125 the chain is Extracellular; sequence QGFFHGFHDGKIHVGIE. A helical transmembrane segment spans residues 126–146; sequence SMINADFCTGAVLISFGAVLG. Residues 147–150 are Cytoplasmic-facing; it reads KTSP. A helical transmembrane segment spans residues 151-171; it reads VQLIVMTLIEVTLFGINEYII. Over 172-179 the chain is Extracellular; the sequence is LNIVGAKD. A helical transmembrane segment spans residues 180-202; the sequence is AGGSMTIHTFGAYFGLIVSRVLY. Over 203–220 the chain is Cytoplasmic; sequence RADLDKSRQREGSVYHSD. The helical transmembrane segment at 221–241 threads the bilayer; sequence LFAMIGTIYLWMFWPSFNSAV. Topologically, residues 242 to 252 are extracellular; sequence TAHGDDQHRTV. Residues 253-273 traverse the membrane as a helical segment; it reads LNTYYSLAACTLATFGFSALL. Over 274-283 the chain is Cytoplasmic; the sequence is NGEGKLDMVH. Residues 284 to 304 traverse the membrane as a helical segment; the sequence is IQNAALAGGVAVGTSGEMMLT. Position 305 (P305) is a topological domain, extracellular. A helical membrane pass occupies residues 306-326; that stretch reads FGAMIAGTLAGIVSVLGYKYL. At 327–347 the chain is on the cytoplasmic side; that stretch reads TPVLDSKLKIQDTCGVHNLHG. A helical transmembrane segment spans residues 348–368; it reads MPGILGAVIGAIVALFATADI. The Extracellular segment spans residues 369–394; that stretch reads YGDGMDDVFPMIFDGSRTAKQQSLYQ. Residues 395 to 415 form a helical membrane-spanning segment; sequence FLALLVALGFAIVGGTVVGFI. The Cytoplasmic portion of the chain corresponds to 416 to 460; that stretch reads LKLPLFGTPSDAECFEDAVYWEVPGGEGHQQLTVVVNNEDPDTQA.

It belongs to the ammonium transporter (TC 2.A.49) family. Rh subfamily.

It is found in the basolateral cell membrane. Its subcellular location is the cytoplasmic vesicle membrane. Functionally, functions as a specific ammonium transporter. This Xenopus laevis (African clawed frog) protein is Ammonium transporter Rh type B-A (rhbg-a).